Here is a 632-residue protein sequence, read N- to C-terminus: Chaperone protein HtpG (632 aa).

An a; substrate-binding region spans residues 1 to 339 (MTQQTMSFQA…SSDLPLNVSR (339 aa)). Positions 340–559 (EILQESRDVK…DNDMSGYLQR (220 aa)) are b. A c region spans residues 560 to 632 (MLKAAGQNAP…TNALLLSRAA (73 aa)).

It belongs to the heat shock protein 90 family. In terms of assembly, homodimer.

Its subcellular location is the cytoplasm. In terms of biological role, molecular chaperone. Has ATPase activity. The protein is Chaperone protein HtpG of Burkholderia thailandensis (strain ATCC 700388 / DSM 13276 / CCUG 48851 / CIP 106301 / E264).